The sequence spans 61 residues: L-amino-acid oxidase (61 aa).

43-44 (MA) contacts FAD.

It belongs to the flavin monoamine oxidase family. FIG1 subfamily. In terms of assembly, homodimer; non-covalently linked. FAD serves as cofactor. N-glycosylated. In terms of tissue distribution, expressed by the venom gland.

It is found in the secreted. The enzyme catalyses an L-alpha-amino acid + O2 + H2O = a 2-oxocarboxylate + H2O2 + NH4(+). It catalyses the reaction L-leucine + O2 + H2O = 4-methyl-2-oxopentanoate + H2O2 + NH4(+). In terms of biological role, catalyzes an oxidative deamination of predominantly hydrophobic and aromatic L-amino acids, thus producing hydrogen peroxide that may contribute to the diverse toxic effects of this enzyme. Shows activity on L-Leu. Exhibits diverse biological activities, such as apoptosis, antibacterial activities against both Gram-negative and Gram-positive bacteria and antiparasitic activities, as well as induction of platelet aggregation. Effects of snake L-amino oxidases on platelets are controversial, since they either induce aggregation or inhibit agonist-induced aggregation. These different effects are probably due to different experimental conditions. This protein may also induce hemorrhage, hemolysis, and edema. The sequence is that of L-amino-acid oxidase from Crotalus durissus cascavella (Northeastern Brazilian rattlesnake).